Reading from the N-terminus, the 321-residue chain is Tyrosine recombinase XerC (321 aa).

A Core-binding (CB) domain is found at S16–E107. Positions S128–R315 constitute a Tyr recombinase domain. Residues R173, K199, H267, R270, and H293 contribute to the active site. The active-site O-(3'-phospho-DNA)-tyrosine intermediate is the Y302.

Belongs to the 'phage' integrase family. XerC subfamily. In terms of assembly, forms a cyclic heterotetrameric complex composed of two molecules of XerC and two molecules of XerD.

The protein localises to the cytoplasm. In terms of biological role, site-specific tyrosine recombinase, which acts by catalyzing the cutting and rejoining of the recombining DNA molecules. The XerC-XerD complex is essential to convert dimers of the bacterial chromosome into monomers to permit their segregation at cell division. It also contributes to the segregational stability of plasmids. The protein is Tyrosine recombinase XerC of Nitrobacter winogradskyi (strain ATCC 25391 / DSM 10237 / CIP 104748 / NCIMB 11846 / Nb-255).